Reading from the N-terminus, the 1401-residue chain is Kinesin-like protein KIF27 (1401 aa).

A Kinesin motor domain is found at 5 to 341; that stretch reads PVKVAVRIRP…LKYANRARNI (337 aa). ATP is bound at residue 84–91; it reads GQTGSGKT. Coiled-coil stretches lie at residues 352–413 and 489–557; these read ESDR…GYQC and LAAD…KLNL. Ser-643, Ser-646, Ser-672, Ser-675, and Ser-704 each carry phosphoserine. The segment at 643–662 is disordered; the sequence is SDNSDDEESEGQEKSGTRCR. 4 coiled-coil regions span residues 705–886, 916–1070, 1118–1154, and 1190–1219; these read QELN…IQLK, DHLQ…AAIE, NKVV…LESA, and EGIM…TSRD. The residue at position 999 (Ser-999) is a Phosphoserine. The span at 1259–1280 shows a compositional bias: basic and acidic residues; that stretch reads EELKWASRPESMKLSGREREMD. A disordered region spans residues 1259–1332; the sequence is EELKWASRPE…TETDDNQFTK (74 aa). Residues 1281–1292 are compositionally biased toward polar residues; that stretch reads SSASSLRTQPNP. 2 positions are modified to phosphoserine: Ser-1367 and Ser-1389.

The protein belongs to the TRAFAC class myosin-kinesin ATPase superfamily. Kinesin family. KIF27 subfamily. In terms of assembly, interacts with STK36. Testis, pancreatic islet, germ cell tumors and Jurkat T-cells.

The protein localises to the cytoplasm. The protein resides in the cytoskeleton. Its subcellular location is the cell projection. It is found in the cilium. In terms of biological role, plays an essential role in motile ciliogenesis. In Homo sapiens (Human), this protein is Kinesin-like protein KIF27 (KIF27).